Consider the following 394-residue polypeptide: 1-deoxy-D-xylulose 5-phosphate reductoisomerase (394 aa).

NADPH-binding residues include threonine 12, glycine 13, serine 14, isoleucine 15, lysine 39, glutamine 40, and asparagine 126. A 1-deoxy-D-xylulose 5-phosphate-binding site is contributed by lysine 127. Glutamate 128 provides a ligand contact to NADPH. Position 152 (aspartate 152) interacts with Mn(2+). 1-deoxy-D-xylulose 5-phosphate-binding residues include serine 153, glutamate 154, serine 183, and histidine 206. Glutamate 154 contributes to the Mn(2+) binding site. Glycine 212 lines the NADPH pocket. 1-deoxy-D-xylulose 5-phosphate contacts are provided by serine 219, asparagine 224, lysine 225, and glutamate 228. Residue glutamate 228 participates in Mn(2+) binding.

This sequence belongs to the DXR family. Mg(2+) serves as cofactor. Mn(2+) is required as a cofactor.

The catalysed reaction is 2-C-methyl-D-erythritol 4-phosphate + NADP(+) = 1-deoxy-D-xylulose 5-phosphate + NADPH + H(+). The protein operates within isoprenoid biosynthesis; isopentenyl diphosphate biosynthesis via DXP pathway; isopentenyl diphosphate from 1-deoxy-D-xylulose 5-phosphate: step 1/6. In terms of biological role, catalyzes the NADPH-dependent rearrangement and reduction of 1-deoxy-D-xylulose-5-phosphate (DXP) to 2-C-methyl-D-erythritol 4-phosphate (MEP). The sequence is that of 1-deoxy-D-xylulose 5-phosphate reductoisomerase from Neisseria meningitidis serogroup B (strain ATCC BAA-335 / MC58).